We begin with the raw amino-acid sequence, 427 residues long: D-inositol 3-phosphate glycosyltransferase 2 (427 aa).

His-14 is a 1D-myo-inositol 3-phosphate binding site. UDP-N-acetyl-alpha-D-glucosamine contacts are provided by residues 20–21 (QP) and Gly-28. 1D-myo-inositol 3-phosphate-binding positions include 25-30 (DAGGMN), Lys-83, Tyr-116, Thr-140, and Arg-160. UDP-N-acetyl-alpha-D-glucosamine contacts are provided by Arg-234, Lys-239, and Val-300. The Mg(2+) site is built by Tyr-309, Arg-310, and Ala-312. UDP-N-acetyl-alpha-D-glucosamine-binding residues include Glu-322 and Glu-330. Thr-336 contacts Mg(2+).

The protein belongs to the glycosyltransferase group 1 family. MshA subfamily. As to quaternary structure, homodimer.

It carries out the reaction 1D-myo-inositol 3-phosphate + UDP-N-acetyl-alpha-D-glucosamine = 1D-myo-inositol 2-acetamido-2-deoxy-alpha-D-glucopyranoside 3-phosphate + UDP + H(+). In terms of biological role, catalyzes the transfer of a N-acetyl-glucosamine moiety to 1D-myo-inositol 3-phosphate to produce 1D-myo-inositol 2-acetamido-2-deoxy-glucopyranoside 3-phosphate in the mycothiol biosynthesis pathway. In Catenulispora acidiphila (strain DSM 44928 / JCM 14897 / NBRC 102108 / NRRL B-24433 / ID139908), this protein is D-inositol 3-phosphate glycosyltransferase 2.